Here is a 296-residue protein sequence, read N- to C-terminus: NAD kinase (296 aa).

The active-site Proton acceptor is Asp72. NAD(+) is bound by residues 72-73, 146-147, Arg157, Lys174, Asp176, 187-192, and Gln247; these read DG, ND, and TAYALS.

The protein belongs to the NAD kinase family. Requires a divalent metal cation as cofactor.

It is found in the cytoplasm. It carries out the reaction NAD(+) + ATP = ADP + NADP(+) + H(+). Functionally, involved in the regulation of the intracellular balance of NAD and NADP, and is a key enzyme in the biosynthesis of NADP. Catalyzes specifically the phosphorylation on 2'-hydroxyl of the adenosine moiety of NAD to yield NADP. In Pseudomonas syringae pv. syringae (strain B728a), this protein is NAD kinase.